The sequence spans 358 residues: Methylthioribose-1-phosphate isomerase (358 aa).

Substrate-binding positions include 54–56 (RGA), Arg96, and Gln205. Asp246 functions as the Proton donor in the catalytic mechanism. 256-257 (NK) serves as a coordination point for substrate.

Belongs to the eIF-2B alpha/beta/delta subunits family. MtnA subfamily.

The enzyme catalyses 5-(methylsulfanyl)-alpha-D-ribose 1-phosphate = 5-(methylsulfanyl)-D-ribulose 1-phosphate. Its pathway is amino-acid biosynthesis; L-methionine biosynthesis via salvage pathway; L-methionine from S-methyl-5-thio-alpha-D-ribose 1-phosphate: step 1/6. In terms of biological role, catalyzes the interconversion of methylthioribose-1-phosphate (MTR-1-P) into methylthioribulose-1-phosphate (MTRu-1-P). The sequence is that of Methylthioribose-1-phosphate isomerase from Pseudomonas aeruginosa (strain UCBPP-PA14).